The sequence spans 847 residues: Alanine--tRNA ligase (847 aa).

The Zn(2+) site is built by His-554, His-558, Cys-656, and His-660.

The protein belongs to the class-II aminoacyl-tRNA synthetase family. The cofactor is Zn(2+).

The protein resides in the cytoplasm. It catalyses the reaction tRNA(Ala) + L-alanine + ATP = L-alanyl-tRNA(Ala) + AMP + diphosphate. Functionally, catalyzes the attachment of alanine to tRNA(Ala) in a two-step reaction: alanine is first activated by ATP to form Ala-AMP and then transferred to the acceptor end of tRNA(Ala). Also edits incorrectly charged Ser-tRNA(Ala) and Gly-tRNA(Ala) via its editing domain. This Helicobacter acinonychis (strain Sheeba) protein is Alanine--tRNA ligase.